Reading from the N-terminus, the 337-residue chain is Glycerol-3-phosphate dehydrogenase [NAD(P)+] 2 (337 aa).

Residues Thr11, Trp12, and Lys105 each contribute to the NADPH site. Positions 105, 139, and 141 each coordinate sn-glycerol 3-phosphate. Ala143 lines the NADPH pocket. Sn-glycerol 3-phosphate-binding residues include Lys194, Asp247, Ser257, Arg258, and Asn259. The active-site Proton acceptor is the Lys194. Residue Arg258 coordinates NADPH. NADPH-binding residues include Val282 and Glu284.

The protein belongs to the NAD-dependent glycerol-3-phosphate dehydrogenase family.

It localises to the cytoplasm. The catalysed reaction is sn-glycerol 3-phosphate + NAD(+) = dihydroxyacetone phosphate + NADH + H(+). The enzyme catalyses sn-glycerol 3-phosphate + NADP(+) = dihydroxyacetone phosphate + NADPH + H(+). It functions in the pathway membrane lipid metabolism; glycerophospholipid metabolism. Catalyzes the reduction of the glycolytic intermediate dihydroxyacetone phosphate (DHAP) to sn-glycerol 3-phosphate (G3P), the key precursor for phospholipid synthesis. This Lactobacillus delbrueckii subsp. bulgaricus (strain ATCC 11842 / DSM 20081 / BCRC 10696 / JCM 1002 / NBRC 13953 / NCIMB 11778 / NCTC 12712 / WDCM 00102 / Lb 14) protein is Glycerol-3-phosphate dehydrogenase [NAD(P)+] 2.